Reading from the N-terminus, the 228-residue chain is Cytidylate kinase (228 aa).

ATP is bound at residue 12–20 (GPASAGKST).

Belongs to the cytidylate kinase family. Type 1 subfamily.

It localises to the cytoplasm. It catalyses the reaction CMP + ATP = CDP + ADP. The enzyme catalyses dCMP + ATP = dCDP + ADP. The chain is Cytidylate kinase from Lactiplantibacillus plantarum (strain ATCC BAA-793 / NCIMB 8826 / WCFS1) (Lactobacillus plantarum).